The chain runs to 464 residues: Argininosuccinate lyase (464 aa).

This sequence belongs to the lyase 1 family. Argininosuccinate lyase subfamily.

The protein resides in the cytoplasm. The catalysed reaction is 2-(N(omega)-L-arginino)succinate = fumarate + L-arginine. The protein operates within amino-acid biosynthesis; L-arginine biosynthesis; L-arginine from L-ornithine and carbamoyl phosphate: step 3/3. The polypeptide is Argininosuccinate lyase (Pseudomonas savastanoi pv. phaseolicola (strain 1448A / Race 6) (Pseudomonas syringae pv. phaseolicola (strain 1448A / Race 6))).